We begin with the raw amino-acid sequence, 616 residues long: Pyrophosphate--fructose 6-phosphate 1-phosphotransferase subunit alpha (616 aa).

The protein belongs to the phosphofructokinase type A (PFKA) family. PPi-dependent PFK group II subfamily. Clade 'Long' sub-subfamily. In terms of assembly, tetramer of two alpha (regulatory) and two beta (catalytic) chains.

It localises to the cytoplasm. It participates in carbohydrate degradation; glycolysis; D-glyceraldehyde 3-phosphate and glycerone phosphate from D-glucose: step 3/4. Its activity is regulated as follows. Allosterically activated by fructose 2,6-bisphosphate. Its function is as follows. Regulatory subunit of pyrophosphate--fructose 6-phosphate 1-phosphotransferase. The protein is Pyrophosphate--fructose 6-phosphate 1-phosphotransferase subunit alpha of Solanum tuberosum (Potato).